Reading from the N-terminus, the 156-residue chain is Small ribosomal subunit protein uS7 (156 aa).

This sequence belongs to the universal ribosomal protein uS7 family. As to quaternary structure, part of the 30S ribosomal subunit. Contacts proteins S9 and S11.

Functionally, one of the primary rRNA binding proteins, it binds directly to 16S rRNA where it nucleates assembly of the head domain of the 30S subunit. Is located at the subunit interface close to the decoding center, probably blocks exit of the E-site tRNA. The polypeptide is Small ribosomal subunit protein uS7 (Picosynechococcus sp. (strain ATCC 27264 / PCC 7002 / PR-6) (Agmenellum quadruplicatum)).